We begin with the raw amino-acid sequence, 1245 residues long: Trafficking protein particle complex II-specific subunit 130 homolog (1245 aa).

2 disordered regions span residues Gly488–Pro524 and His884–Val903. 2 stretches are compositionally biased toward low complexity: residues Ala495–Asn507 and Thr888–Thr898.

Belongs to the TMEM1 family. As to quaternary structure, part of the multisubunit TRAPP (transport protein particle) II complex composed of BET3, BET5, TRS20, TRS23, TRS31, TRS33, TRS65, TRS85, TRS120 and TRS130.

The protein localises to the golgi apparatus. It localises to the trans-Golgi network. It is found in the early endosome. In terms of biological role, specific subunit of the TRAPP II complex, a highly conserved vesicle tethering complex that is required for the proper transport of proteins in post-Golgi trafficking pathways to the growing cell plate in mitotic active cells. The chain is Trafficking protein particle complex II-specific subunit 130 homolog from Oryza sativa subsp. japonica (Rice).